The sequence spans 517 residues: GMP synthase [glutamine-hydrolyzing] (517 aa).

The Glutamine amidotransferase type-1 domain maps to 4–193 (KIIILDFGSQ…VVDICGGKQD (190 aa)). Cysteine 79 (nucleophile) is an active-site residue. Residues histidine 167 and glutamate 169 contribute to the active site. One can recognise a GMPS ATP-PPase domain in the interval 194 to 382 (WSAASFIETT…LGMPEHLITR (189 aa)). 221-227 (SGGVDSS) lines the ATP pocket.

In terms of assembly, homodimer.

The catalysed reaction is XMP + L-glutamine + ATP + H2O = GMP + L-glutamate + AMP + diphosphate + 2 H(+). It functions in the pathway purine metabolism; GMP biosynthesis; GMP from XMP (L-Gln route): step 1/1. Its function is as follows. Catalyzes the synthesis of GMP from XMP. This Phocaeicola vulgatus (strain ATCC 8482 / DSM 1447 / JCM 5826 / CCUG 4940 / NBRC 14291 / NCTC 11154) (Bacteroides vulgatus) protein is GMP synthase [glutamine-hydrolyzing].